The chain runs to 313 residues: E3 ubiquitin-protein ligase SGIP1 (313 aa).

The F-box domain occupies 16-65 (REYSKEIPIDLLIEIFSRLSTGDIARCRCVSKIWSSVPRLRDFTELFLKI).

Interacts with SGS3 in cytoplasmic granules.

It is found in the cytoplasmic granule. It carries out the reaction S-ubiquitinyl-[E2 ubiquitin-conjugating enzyme]-L-cysteine + [acceptor protein]-L-lysine = [E2 ubiquitin-conjugating enzyme]-L-cysteine + N(6)-ubiquitinyl-[acceptor protein]-L-lysine.. Its pathway is protein degradation; proteasomal ubiquitin-dependent pathway. The protein operates within protein modification; protein ubiquitination. E3 ubiquitin-protein ligase which triggers the ubiquitination and subsequent degradation of SGS3 in response to heat. Involved in the mechanisms necessary for quick response to heat and subsequent heritable transgenerational memory of heat acclimation (global warming) such as early flowering and attenuated immunity; this process includes epigenetic regulation as well as post-transcriptional gene silencing (PTGS). In response to heat, HSFA2 is activated and promotes the expression of REF6 which in turn derepresses HSFA2, thus establishing an inheritable feedback loop able to trigger SGIP1 and subsequent SGIP1-mediated SGS3 degradation; this prevents the biosynthesis of trans-acting siRNA (tasiRNA) and leads to the release of HTT5, which drives early flowering but attenuates immunity. The protein is E3 ubiquitin-protein ligase SGIP1 of Arabidopsis thaliana (Mouse-ear cress).